Consider the following 330-residue polypeptide: tRNA N6-adenosine threonylcarbamoyltransferase (330 aa).

Fe cation is bound by residues His110 and His114. Substrate is bound by residues 133 to 137 (MVSGG), Asp166, Gly179, Asp183, and Asn271. Asp299 contributes to the Fe cation binding site.

The protein belongs to the KAE1 / TsaD family. Fe(2+) serves as cofactor.

The protein localises to the cytoplasm. It carries out the reaction L-threonylcarbamoyladenylate + adenosine(37) in tRNA = N(6)-L-threonylcarbamoyladenosine(37) in tRNA + AMP + H(+). Required for the formation of a threonylcarbamoyl group on adenosine at position 37 (t(6)A37) in tRNAs that read codons beginning with adenine. Is involved in the transfer of the threonylcarbamoyl moiety of threonylcarbamoyl-AMP (TC-AMP) to the N6 group of A37, together with TsaE and TsaB. TsaD likely plays a direct catalytic role in this reaction. This chain is tRNA N6-adenosine threonylcarbamoyltransferase, found in Thermosipho africanus (strain TCF52B).